Reading from the N-terminus, the 342-residue chain is DNA primase small subunit PriS (342 aa).

Active-site residues include aspartate 97, aspartate 99, and aspartate 276.

This sequence belongs to the eukaryotic-type primase small subunit family. Heterodimer of a small subunit (PriS) and a large subunit (PriL). Requires Mg(2+) as cofactor. Mn(2+) serves as cofactor.

Catalytic subunit of DNA primase, an RNA polymerase that catalyzes the synthesis of short RNA molecules used as primers for DNA polymerase during DNA replication. The small subunit contains the primase catalytic core and has DNA synthesis activity on its own. Binding to the large subunit stabilizes and modulates the activity, increasing the rate of DNA synthesis while decreasing the length of the DNA fragments, and conferring RNA synthesis capability. The DNA polymerase activity may enable DNA primase to also catalyze primer extension after primer synthesis. May also play a role in DNA repair. This is DNA primase small subunit PriS from Thermococcus sibiricus (strain DSM 12597 / MM 739).